The sequence spans 141 residues: Ribonuclease P protein component (141 aa).

Disordered stretches follow at residues 37–56 (RTEE…VGFT) and 114–141 (RRIT…VNGK). Over residues 114 to 123 (RRITAKGERR) the composition is skewed to basic and acidic residues.

It belongs to the RnpA family. In terms of assembly, consists of a catalytic RNA component (M1 or rnpB) and a protein subunit.

It carries out the reaction Endonucleolytic cleavage of RNA, removing 5'-extranucleotides from tRNA precursor.. RNaseP catalyzes the removal of the 5'-leader sequence from pre-tRNA to produce the mature 5'-terminus. It can also cleave other RNA substrates such as 4.5S RNA. The protein component plays an auxiliary but essential role in vivo by binding to the 5'-leader sequence and broadening the substrate specificity of the ribozyme. The polypeptide is Ribonuclease P protein component (Brucella suis biovar 1 (strain 1330)).